The following is a 255-amino-acid chain: uncharacterized protein (255 aa).

Residues methionine 1–glycine 23 form the signal peptide. Cysteine 24 carries the N-palmitoyl cysteine lipid modification. Residue cysteine 24 is the site of S-diacylglycerol cysteine attachment.

It belongs to the staphylococcal tandem lipoprotein family.

Its subcellular location is the cell membrane. This is an uncharacterized protein from Staphylococcus aureus (strain N315).